The chain runs to 293 residues: tRNA(His) guanylyltransferase (293 aa).

Positions 29, 30, and 76 each coordinate Mg(2+). Residues 29 to 34 (DGRGFT) and 75 to 76 (SD) each bind GTP. Positions 226–252 (KKVSEEEAEEMSSSAVPEVKSKSQVEK) are disordered.

This sequence belongs to the tRNA(His) guanylyltransferase family. The cofactor is Mg(2+).

The catalysed reaction is a 5'-end ribonucleotide-tRNA(His) + GTP + ATP + H2O = a 5'-end phospho-guanosine-ribonucleotide-tRNA(His) + AMP + 2 diphosphate + H(+). Its function is as follows. Adds a GMP to the 5'-end of tRNA(His) after transcription and RNase P cleavage. The chain is tRNA(His) guanylyltransferase (rgt-1) from Neurospora crassa (strain ATCC 24698 / 74-OR23-1A / CBS 708.71 / DSM 1257 / FGSC 987).